Reading from the N-terminus, the 341-residue chain is Endolytic peptidoglycan transglycosylase RlpA (341 aa).

A signal peptide spans 1–26 (MSKRVRSSLILPAVCGLGLAAVLLSS). Cysteine 27 is lipidated: N-palmitoyl cysteine. Cysteine 27 carries the S-diacylglycerol cysteine lipid modification. Residues 260-341 (SLPADGLYLQ…LGQPTLVRPD (82 aa)) form the SPOR domain.

The protein belongs to the RlpA family.

It is found in the cell membrane. Lytic transglycosylase with a strong preference for naked glycan strands that lack stem peptides. Required for efficient separation of daughter cells and maintenance of rod shape. The protein is Endolytic peptidoglycan transglycosylase RlpA of Pseudomonas aeruginosa (strain UCBPP-PA14).